The primary structure comprises 154 residues: 6,7-dimethyl-8-ribityllumazine synthase (154 aa).

5-amino-6-(D-ribitylamino)uracil is bound by residues F22, 56-58, and 80-82; these read SFE and AVI. 85–86 provides a ligand contact to (2S)-2-hydroxy-3-oxobutyl phosphate; the sequence is ST. Residue H88 is the Proton donor of the active site. Y113 lines the 5-amino-6-(D-ribitylamino)uracil pocket. R127 serves as a coordination point for (2S)-2-hydroxy-3-oxobutyl phosphate.

The protein belongs to the DMRL synthase family. As to quaternary structure, forms an icosahedral capsid composed of 60 subunits, arranged as a dodecamer of pentamers.

It carries out the reaction (2S)-2-hydroxy-3-oxobutyl phosphate + 5-amino-6-(D-ribitylamino)uracil = 6,7-dimethyl-8-(1-D-ribityl)lumazine + phosphate + 2 H2O + H(+). It functions in the pathway cofactor biosynthesis; riboflavin biosynthesis; riboflavin from 2-hydroxy-3-oxobutyl phosphate and 5-amino-6-(D-ribitylamino)uracil: step 1/2. Its function is as follows. Catalyzes the formation of 6,7-dimethyl-8-ribityllumazine by condensation of 5-amino-6-(D-ribitylamino)uracil with 3,4-dihydroxy-2-butanone 4-phosphate. This is the penultimate step in the biosynthesis of riboflavin. This is 6,7-dimethyl-8-ribityllumazine synthase from Sulfurihydrogenibium sp. (strain YO3AOP1).